The chain runs to 138 residues: Endoribonuclease YbeY (138 aa).

The Zn(2+) site is built by H105, H109, and D115.

It belongs to the endoribonuclease YbeY family. Zn(2+) is required as a cofactor.

The protein resides in the cytoplasm. Single strand-specific metallo-endoribonuclease involved in late-stage 70S ribosome quality control and in maturation of the 3' terminus of the 16S rRNA. The polypeptide is Endoribonuclease YbeY (Chlorobium phaeobacteroides (strain BS1)).